Reading from the N-terminus, the 121-residue chain is Large ribosomal subunit protein uL22 (121 aa).

This sequence belongs to the universal ribosomal protein uL22 family. In terms of assembly, part of the 50S ribosomal subunit.

Its function is as follows. This protein binds specifically to 23S rRNA; its binding is stimulated by other ribosomal proteins, e.g. L4, L17, and L20. It is important during the early stages of 50S assembly. It makes multiple contacts with different domains of the 23S rRNA in the assembled 50S subunit and ribosome. In terms of biological role, the globular domain of the protein is located near the polypeptide exit tunnel on the outside of the subunit, while an extended beta-hairpin is found that lines the wall of the exit tunnel in the center of the 70S ribosome. This Hydrogenobaculum sp. (strain Y04AAS1) protein is Large ribosomal subunit protein uL22.